The sequence spans 102 residues: Large ribosomal subunit protein bL21 (102 aa).

This sequence belongs to the bacterial ribosomal protein bL21 family. Part of the 50S ribosomal subunit. Contacts protein L20.

In terms of biological role, this protein binds to 23S rRNA in the presence of protein L20. In Bacillus subtilis (strain 168), this protein is Large ribosomal subunit protein bL21.